The sequence spans 314 residues: tRNA dimethylallyltransferase (314 aa).

6–13 (GPTAVGKT) provides a ligand contact to ATP. Substrate is bound at residue 8–13 (TAVGKT). The interval 31 to 34 (DSRQ) is interaction with substrate tRNA.

It belongs to the IPP transferase family. In terms of assembly, monomer. Mg(2+) is required as a cofactor.

The enzyme catalyses adenosine(37) in tRNA + dimethylallyl diphosphate = N(6)-dimethylallyladenosine(37) in tRNA + diphosphate. Its function is as follows. Catalyzes the transfer of a dimethylallyl group onto the adenine at position 37 in tRNAs that read codons beginning with uridine, leading to the formation of N6-(dimethylallyl)adenosine (i(6)A). The sequence is that of tRNA dimethylallyltransferase from Pseudothermotoga lettingae (strain ATCC BAA-301 / DSM 14385 / NBRC 107922 / TMO) (Thermotoga lettingae).